A 244-amino-acid polypeptide reads, in one-letter code: Small ribosomal subunit protein uS2 (244 aa).

It belongs to the universal ribosomal protein uS2 family.

The polypeptide is Small ribosomal subunit protein uS2 (Exiguobacterium sibiricum (strain DSM 17290 / CCUG 55495 / CIP 109462 / JCM 13490 / 255-15)).